The primary structure comprises 235 residues: uncharacterized protein (235 aa).

This is an uncharacterized protein from Escherichia coli (strain K12).